We begin with the raw amino-acid sequence, 497 residues long: Glycerol kinase (497 aa).

Threonine 13 serves as a coordination point for ADP. Residues threonine 13, threonine 14, and serine 15 each contribute to the ATP site. Threonine 13 provides a ligand contact to sn-glycerol 3-phosphate. Arginine 17 contacts ADP. Positions 83, 84, and 135 each coordinate sn-glycerol 3-phosphate. Glycerol contacts are provided by arginine 83, glutamate 84, and tyrosine 135. The residue at position 231 (histidine 231) is a Phosphohistidine; by HPr. Aspartate 245 contributes to the sn-glycerol 3-phosphate binding site. Residues aspartate 245 and glutamine 246 each coordinate glycerol. ADP is bound by residues threonine 267 and glycine 310. Positions 267, 310, 314, and 411 each coordinate ATP. 2 residues coordinate ADP: glycine 411 and asparagine 415.

It belongs to the FGGY kinase family. As to quaternary structure, homotetramer and homodimer (in equilibrium). In terms of processing, the phosphoenolpyruvate-dependent sugar phosphotransferase system (PTS), including enzyme I, and histidine-containing protein (HPr) are required for the phosphorylation, which leads to the activation of the enzyme.

It carries out the reaction glycerol + ATP = sn-glycerol 3-phosphate + ADP + H(+). It functions in the pathway polyol metabolism; glycerol degradation via glycerol kinase pathway; sn-glycerol 3-phosphate from glycerol: step 1/1. Activated by phosphorylation and inhibited by fructose 1,6-bisphosphate (FBP). Functionally, key enzyme in the regulation of glycerol uptake and metabolism. Catalyzes the phosphorylation of glycerol to yield sn-glycerol 3-phosphate. The protein is Glycerol kinase of Listeria monocytogenes serovar 1/2a (strain ATCC BAA-679 / EGD-e).